Here is a 279-residue protein sequence, read N- to C-terminus: Large ribosomal subunit protein uL2 (279 aa).

The segment at 224–279 (AMNPIDHPHGGGEGRTSGGRHPVTPWGKGTKGNRTRKSKASDKLIVRSRHAKKKGR) is disordered. The segment covering 269–279 (VRSRHAKKKGR) has biased composition (basic residues).

Belongs to the universal ribosomal protein uL2 family. Part of the 50S ribosomal subunit. Forms a bridge to the 30S subunit in the 70S ribosome.

Functionally, one of the primary rRNA binding proteins. Required for association of the 30S and 50S subunits to form the 70S ribosome, for tRNA binding and peptide bond formation. It has been suggested to have peptidyltransferase activity; this is somewhat controversial. Makes several contacts with the 16S rRNA in the 70S ribosome. This Cereibacter sphaeroides (strain ATCC 17029 / ATH 2.4.9) (Rhodobacter sphaeroides) protein is Large ribosomal subunit protein uL2.